Consider the following 288-residue polypeptide: Homoserine kinase (288 aa).

79–89 (PPARGLGSSSA) serves as a coordination point for ATP.

It belongs to the GHMP kinase family. Homoserine kinase subfamily.

It localises to the cytoplasm. It catalyses the reaction L-homoserine + ATP = O-phospho-L-homoserine + ADP + H(+). The protein operates within amino-acid biosynthesis; L-threonine biosynthesis; L-threonine from L-aspartate: step 4/5. Its function is as follows. Catalyzes the ATP-dependent phosphorylation of L-homoserine to L-homoserine phosphate. This chain is Homoserine kinase, found in Listeria innocua serovar 6a (strain ATCC BAA-680 / CLIP 11262).